The chain runs to 488 residues: Glycogen synthase (488 aa).

Lys-16 contacts ADP-alpha-D-glucose.

The protein belongs to the glycosyltransferase 1 family. Bacterial/plant glycogen synthase subfamily.

It carries out the reaction [(1-&gt;4)-alpha-D-glucosyl](n) + ADP-alpha-D-glucose = [(1-&gt;4)-alpha-D-glucosyl](n+1) + ADP + H(+). Its pathway is glycan biosynthesis; glycogen biosynthesis. Its function is as follows. Synthesizes alpha-1,4-glucan chains using ADP-glucose. This is Glycogen synthase from Marinobacter nauticus (strain ATCC 700491 / DSM 11845 / VT8) (Marinobacter aquaeolei).